A 123-amino-acid chain; its full sequence is MAKPSYVKFEVPQELAEKALEAVEIARDTGRIRKGTNETTKAVERGQAKLVIIAEDVDPEEIVAHLPPLCEEKEIPYVYVPSKKELGAAAGLEVPAASVAIIEPGKARELVEDIAMKVKELMK.

Belongs to the eukaryotic ribosomal protein eL8 family. As to quaternary structure, part of the 50S ribosomal subunit. Probably part of the RNase P complex.

The protein localises to the cytoplasm. Multifunctional RNA-binding protein that recognizes the K-turn motif in ribosomal RNA, the RNA component of RNase P, box H/ACA, box C/D and box C'/D' sRNAs. The protein is Large ribosomal subunit protein eL8 of Thermococcus kodakarensis (strain ATCC BAA-918 / JCM 12380 / KOD1) (Pyrococcus kodakaraensis (strain KOD1)).